The primary structure comprises 405 residues: Serpin I2 (405 aa).

A signal peptide spans 1–18 (MDTIFLWSLLLLFFGSQA). N-linked (GlcNAc...) asparagine glycosylation is found at asparagine 202, asparagine 207, and asparagine 306.

It belongs to the serpin family. Expressed in pancreas and adipose tissues.

It localises to the secreted. This chain is Serpin I2 (SERPINI2), found in Homo sapiens (Human).